The sequence spans 118 residues: Disulfide bond formation protein (118 aa).

The first 27 residues, 1-27 (MRAKWLWMTAVGSLLITVLTAWGWAAA), serve as a signal peptide directing secretion. Residues 28-114 (SSQDSKIVYV…VAEAVLRSFF (87 aa)) form the Thioredoxin domain. A disulfide bridge links Cys42 with Cys45.

This sequence belongs to the thioredoxin family.

It is found in the secreted. In terms of biological role, stimulates the oxidation and reduction of disulfide bonds in vitro. The chain is Disulfide bond formation protein (bdb) from Brevibacillus choshinensis.